A 321-amino-acid chain; its full sequence is tRNA U34 carboxymethyltransferase (321 aa).

Carboxy-S-adenosyl-L-methionine is bound by residues lysine 90, tryptophan 104, lysine 109, glycine 129, 151 to 153 (DPT), 180 to 181 (IE), methionine 195, tyrosine 199, and arginine 314.

It belongs to the class I-like SAM-binding methyltransferase superfamily. CmoB family. As to quaternary structure, homotetramer.

The catalysed reaction is carboxy-S-adenosyl-L-methionine + 5-hydroxyuridine(34) in tRNA = 5-carboxymethoxyuridine(34) in tRNA + S-adenosyl-L-homocysteine + H(+). Catalyzes carboxymethyl transfer from carboxy-S-adenosyl-L-methionine (Cx-SAM) to 5-hydroxyuridine (ho5U) to form 5-carboxymethoxyuridine (cmo5U) at position 34 in tRNAs. In Pasteurella multocida (strain Pm70), this protein is tRNA U34 carboxymethyltransferase.